The chain runs to 346 residues: Pyrophosphate--fructose 6-phosphate 1-phosphotransferase (346 aa).

Residue Gly13 coordinates diphosphate. Glu105 contributes to the Mg(2+) binding site. Substrate contacts are provided by residues 127-129 (TID), Arg164, 171-173 (MGR), Glu224, Arg269, and 275-278 (HLQR). The active-site Proton acceptor is Asp129.

Belongs to the phosphofructokinase type A (PFKA) family. Mixed-substrate PFK group III subfamily. As to quaternary structure, homodimer. It depends on Mg(2+) as a cofactor.

It localises to the cytoplasm. The catalysed reaction is beta-D-fructose 6-phosphate + diphosphate = beta-D-fructose 1,6-bisphosphate + phosphate + H(+). Its pathway is carbohydrate degradation; glycolysis; D-glyceraldehyde 3-phosphate and glycerone phosphate from D-glucose: step 3/4. With respect to regulation, non-allosteric. Functionally, catalyzes the phosphorylation of D-fructose 6-phosphate, the first committing step of glycolysis. Uses inorganic phosphate (PPi) as phosphoryl donor instead of ATP like common ATP-dependent phosphofructokinases (ATP-PFKs), which renders the reaction reversible, and can thus function both in glycolysis and gluconeogenesis. Consistently, PPi-PFK can replace the enzymes of both the forward (ATP-PFK) and reverse (fructose-bisphosphatase (FBPase)) reactions. The chain is Pyrophosphate--fructose 6-phosphate 1-phosphotransferase from Dictyoglomus thermophilum.